We begin with the raw amino-acid sequence, 426 residues long: Glutamate-1-semialdehyde 2,1-aminomutase (426 aa).

Residue K265 is modified to N6-(pyridoxal phosphate)lysine.

It belongs to the class-III pyridoxal-phosphate-dependent aminotransferase family. HemL subfamily. Homodimer. It depends on pyridoxal 5'-phosphate as a cofactor.

It is found in the cytoplasm. It catalyses the reaction (S)-4-amino-5-oxopentanoate = 5-aminolevulinate. It functions in the pathway porphyrin-containing compound metabolism; protoporphyrin-IX biosynthesis; 5-aminolevulinate from L-glutamyl-tRNA(Glu): step 2/2. The protein is Glutamate-1-semialdehyde 2,1-aminomutase of Aliarcobacter butzleri (strain RM4018) (Arcobacter butzleri).